The sequence spans 683 residues: DNA-directed RNA polymerase subunit beta' (683 aa).

Residues Cys-69, Cys-71, Cys-87, and Cys-90 each coordinate Zn(2+). Asp-492, Asp-494, and Asp-496 together coordinate Mg(2+).

The protein belongs to the RNA polymerase beta' chain family. RpoC1 subfamily. In plastids the minimal PEP RNA polymerase catalytic core is composed of four subunits: alpha, beta, beta', and beta''. When a (nuclear-encoded) sigma factor is associated with the core the holoenzyme is formed, which can initiate transcription. The cofactor is Mg(2+). Zn(2+) serves as cofactor.

The protein resides in the plastid. It is found in the chloroplast. It carries out the reaction RNA(n) + a ribonucleoside 5'-triphosphate = RNA(n+1) + diphosphate. Its function is as follows. DNA-dependent RNA polymerase catalyzes the transcription of DNA into RNA using the four ribonucleoside triphosphates as substrates. This is DNA-directed RNA polymerase subunit beta' from Coffea arabica (Arabian coffee).